The primary structure comprises 864 residues: Translation initiation factor IF-2 (864 aa).

Over residues 140–171 the composition is skewed to basic and acidic residues; the sequence is DSRSLNTKKENKLKISNKDEQNKKFNQHRESN. The interval 140 to 179 is disordered; that stretch reads DSRSLNTKKENKLKISNKDEQNKKFNQHRESNSFDLNHKK. One can recognise a tr-type G domain in the interval 364-533; the sequence is IRAPVVTIMG…LLQAEMLELK (170 aa). The tract at residues 373–380 is G1; the sequence is GHVDHGKT. 373–380 is a GTP binding site; the sequence is GHVDHGKT. The segment at 398 to 402 is G2; that stretch reads GITQN. The segment at 419 to 422 is G3; the sequence is DTPG. Residues 419-423 and 473-476 contribute to the GTP site; these read DTPGH and NKID. Residues 473 to 476 form a G4 region; sequence NKID. The tract at residues 509-511 is G5; sequence SAK.

The protein belongs to the TRAFAC class translation factor GTPase superfamily. Classic translation factor GTPase family. IF-2 subfamily.

The protein resides in the cytoplasm. In terms of biological role, one of the essential components for the initiation of protein synthesis. Protects formylmethionyl-tRNA from spontaneous hydrolysis and promotes its binding to the 30S ribosomal subunits. Also involved in the hydrolysis of GTP during the formation of the 70S ribosomal complex. This chain is Translation initiation factor IF-2, found in Buchnera aphidicola subsp. Acyrthosiphon pisum (strain 5A).